Consider the following 418-residue polypeptide: Glutamyl-tRNA reductase (418 aa).

Substrate is bound by residues 49–52, S109, 114–116, and Q120; these read TCNR and EPQ. C50 acts as the Nucleophile in catalysis. 189-194 serves as a coordination point for NADP(+); it reads GAGETI.

This sequence belongs to the glutamyl-tRNA reductase family. In terms of assembly, homodimer.

The catalysed reaction is (S)-4-amino-5-oxopentanoate + tRNA(Glu) + NADP(+) = L-glutamyl-tRNA(Glu) + NADPH + H(+). It functions in the pathway porphyrin-containing compound metabolism; protoporphyrin-IX biosynthesis; 5-aminolevulinate from L-glutamyl-tRNA(Glu): step 1/2. In terms of biological role, catalyzes the NADPH-dependent reduction of glutamyl-tRNA(Glu) to glutamate 1-semialdehyde (GSA). The protein is Glutamyl-tRNA reductase of Escherichia fergusonii (strain ATCC 35469 / DSM 13698 / CCUG 18766 / IAM 14443 / JCM 21226 / LMG 7866 / NBRC 102419 / NCTC 12128 / CDC 0568-73).